A 325-amino-acid polypeptide reads, in one-letter code: Golgi to ER traffic protein 4 homolog A (325 aa).

2 disordered regions span residues 1–22 and 306–325; these read MAAA…GGVQ and SGED…IELD. Acidic residues predominate over residues 307–317; it reads GEDDDVEDGQE.

It belongs to the GET4 family. As to quaternary structure, component of the bag6/bat3 complex.

It is found in the cytoplasm. It localises to the cytosol. Functionally, as part of a cytosolic protein quality control complex, the bag6/bat3 complex, maintains misfolded and hydrophobic patches-containing proteins in a soluble state and participates in their proper delivery to the endoplasmic reticulum or alternatively can promote their sorting to the proteasome where they undergo degradation. The bag6/bat3 complex is involved in the post-translational delivery of tail-anchored/type II transmembrane proteins to the endoplasmic reticulum membrane. Similarly, the bag6/bat3 complex also functions as a sorting platform for proteins of the secretory pathway that are mislocalized to the cytosol either delivering them to the proteasome for degradation or to the endoplasmic reticulum. The bag6/bat3 complex also plays a role in the endoplasmic reticulum-associated degradation (ERAD), a quality control mechanism that eliminates unwanted proteins of the endoplasmic reticulum through their retrotranslocation to the cytosol and their targeting to the proteasome. It maintains these retrotranslocated proteins in an unfolded yet soluble state condition in the cytosol to ensure their proper delivery to the proteasome. The polypeptide is Golgi to ER traffic protein 4 homolog A (get4-a) (Xenopus laevis (African clawed frog)).